A 310-amino-acid polypeptide reads, in one-letter code: Oxygen-dependent coproporphyrinogen-III oxidase (310 aa).

Position 92 (serine 92) interacts with substrate. Residues histidine 96 and histidine 106 each coordinate a divalent metal cation. The Proton donor role is filled by histidine 106. 108–110 is a binding site for substrate; that stretch reads NVR. Positions 145 and 175 each coordinate a divalent metal cation. The important for dimerization stretch occupies residues 240–275; that stretch reads YVEFNLIWDRGTLFGLQSGGRTESILMSMPPLARWE. Residue 258 to 260 participates in substrate binding; it reads GGR.

It belongs to the aerobic coproporphyrinogen-III oxidase family. As to quaternary structure, homodimer. Requires a divalent metal cation as cofactor.

Its subcellular location is the cytoplasm. It catalyses the reaction coproporphyrinogen III + O2 + 2 H(+) = protoporphyrinogen IX + 2 CO2 + 2 H2O. It participates in porphyrin-containing compound metabolism; protoporphyrin-IX biosynthesis; protoporphyrinogen-IX from coproporphyrinogen-III (O2 route): step 1/1. Involved in the heme biosynthesis. Catalyzes the aerobic oxidative decarboxylation of propionate groups of rings A and B of coproporphyrinogen-III to yield the vinyl groups in protoporphyrinogen-IX. The polypeptide is Oxygen-dependent coproporphyrinogen-III oxidase (Pectobacterium atrosepticum (strain SCRI 1043 / ATCC BAA-672) (Erwinia carotovora subsp. atroseptica)).